Here is a 24-residue protein sequence, read N- to C-terminus: SM-11044-binding protein (24 aa).

Functionally, may mediate relaxation of depolarized colon tonus. It binds iodocyanopindolol and SM-11044. The chain is SM-11044-binding protein from Rattus norvegicus (Rat).